Consider the following 194-residue polypeptide: MIGRITGLLLEKHPPLVLVDVQGTGYEIDVPMSTFCKLPDIGKKVTLHTHFWVREDVHLLFGFMTEQERALFRQLTKISGIGARTGLAILSGLSVTDLHQAVVSQDSIRLTKIPGIGKKTAERLLLELRDKIDPVAILSEAGAAASNVDKDILSALLALGYNGREVNRALEQLSEGVTVSDGIMQSLKFLSKVK.

The domain I stretch occupies residues 1-64 (MIGRITGLLL…EDVHLLFGFM (64 aa)). The tract at residues 65 to 140 (TEQERALFRQ…KIDPVAILSE (76 aa)) is domain II. Residues 140-143 (EAGA) form a flexible linker region. Residues 144 to 194 (AASNVDKDILSALLALGYNGREVNRALEQLSEGVTVSDGIMQSLKFLSKVK) are domain III.

This sequence belongs to the RuvA family. Homotetramer. Forms an RuvA(8)-RuvB(12)-Holliday junction (HJ) complex. HJ DNA is sandwiched between 2 RuvA tetramers; dsDNA enters through RuvA and exits via RuvB. An RuvB hexamer assembles on each DNA strand where it exits the tetramer. Each RuvB hexamer is contacted by two RuvA subunits (via domain III) on 2 adjacent RuvB subunits; this complex drives branch migration. In the full resolvosome a probable DNA-RuvA(4)-RuvB(12)-RuvC(2) complex forms which resolves the HJ.

Its subcellular location is the cytoplasm. Functionally, the RuvA-RuvB-RuvC complex processes Holliday junction (HJ) DNA during genetic recombination and DNA repair, while the RuvA-RuvB complex plays an important role in the rescue of blocked DNA replication forks via replication fork reversal (RFR). RuvA specifically binds to HJ cruciform DNA, conferring on it an open structure. The RuvB hexamer acts as an ATP-dependent pump, pulling dsDNA into and through the RuvAB complex. HJ branch migration allows RuvC to scan DNA until it finds its consensus sequence, where it cleaves and resolves the cruciform DNA. This Nitrosomonas eutropha (strain DSM 101675 / C91 / Nm57) protein is Holliday junction branch migration complex subunit RuvA.